A 191-amino-acid chain; its full sequence is Casparian strip membrane protein 4 (191 aa).

Over 1 to 27 (MKTGSVEAGEQASEDATPRRGKKLNRG) the chain is Cytoplasmic. Residues 28-48 (ILILDLVLRVFGAICTLGSAV) form a helical membrane-spanning segment. Residues 49–72 (AMGTTSQTLPSSSQFFRFRAKYND) lie on the Extracellular side of the membrane. Residues 73–93 (LPMFMFFAIANSIVCAYLVLS) traverse the membrane as a helical segment. At 94-110 (LRLSIFHIIRSAGIITR) the chain is on the cytoplasmic side. The helical transmembrane segment at 111–131 (IILVTFDMVMLVLLTCGASAA) threads the bilayer. Over 132–160 (TSIVYLAHKGNASANWLPFCVRFSHFCNR) the chain is Extracellular. The N-linked (GlcNAc...) asparagine glycan is linked to asparagine 142. The helical transmembrane segment at 161–181 (ISGSLIGSFFSIIIFMLLVIL) threads the bilayer. Residues 182–191 (SAVSQFSICN) lie on the Cytoplasmic side of the membrane.

Belongs to the Casparian strip membrane proteins (CASP) family. In terms of assembly, homodimer and heterodimers.

The protein localises to the cell membrane. Regulates membrane-cell wall junctions and localized cell wall deposition. Required for establishment of the Casparian strip membrane domain (CSD) and the subsequent formation of Casparian strips, a cell wall modification of the root endodermis that determines an apoplastic barrier between the intraorganismal apoplasm and the extraorganismal apoplasm and prevents lateral diffusion. The chain is Casparian strip membrane protein 4 from Ricinus communis (Castor bean).